The following is a 510-amino-acid chain: 2,3-bisphosphoglycerate-independent phosphoglycerate mutase (510 aa).

Positions 13 and 63 each coordinate Mn(2+). Catalysis depends on S63, which acts as the Phosphoserine intermediate. Residues H124, 154-155 (RD), R186, R192, 262-265 (RADR), and K334 each bind substrate. Mn(2+)-binding residues include D401, H405, D442, H443, and H461.

This sequence belongs to the BPG-independent phosphoglycerate mutase family. In terms of assembly, monomer. Mn(2+) serves as cofactor.

The enzyme catalyses (2R)-2-phosphoglycerate = (2R)-3-phosphoglycerate. It functions in the pathway carbohydrate degradation; glycolysis; pyruvate from D-glyceraldehyde 3-phosphate: step 3/5. Its function is as follows. Catalyzes the interconversion of 2-phosphoglycerate and 3-phosphoglycerate. The protein is 2,3-bisphosphoglycerate-independent phosphoglycerate mutase of Vibrio campbellii (strain ATCC BAA-1116).